The sequence spans 142 residues: Hemoglobin subunit alpha-4 (142 aa).

The Globin domain occupies 2–142 (VLSAADKSNV…VSTVLTSKYR (141 aa)). His-59 contacts O2. Residue His-88 participates in heme b binding.

This sequence belongs to the globin family. In terms of assembly, heterotetramer of two alpha chains and two beta chains. As to expression, red blood cells.

Its function is as follows. Involved in oxygen transport from the lung to the various peripheral tissues. This chain is Hemoglobin subunit alpha-4, found in Bubalus bubalis (Domestic water buffalo).